Reading from the N-terminus, the 757-residue chain is MWAPSGQGPAGWDRRRVGARLRAALAGLQELQGLRATQQARVRGALGLHPAPGPRGQELRLEAALTALREQLSRLRRQDAGLKTHLDQLDQQISELQLDVSRSSCEALDSDSRPSSGFYELSDAGSCSLSTSCASVCSDRLSPSLGSWLPVFQPSKSRSGIGDWRPRSADETTVPAWSPQLTEDSRLLHGAEGTGRLTGMFRPRPVSTGDLERVLPADVGLQRAGTDAAHLLGQGIEIPAHALDPTYQRDLVARGGQEVYPYPSPLHAVALQSPLFALPKEAPCFDICSPPQEPPLVPVDENRTQPEPIRELGSAEAYIHRLLHLRGQELPLRDVGQEQGGDTAAFPPKPCGQRSESTCQLEKQACGADRGGLKLGRGAAKDSLKQHGPVSLVGAEPLSSPLKEETIPWNPCVHGDNTVGSSPCSQAQQPLNDCGQGPVLSPSRVLGTESPPLAPEPFAYTSCTTGETSPVKLRMGFSQNKAVKVRRRVSEKVPRLGKQLPPQPERQRVTERDPSRPHQGGLSRRPTLAREPPGRSCSESTLYPVPFLVPVVVAQRESYPTSPQAFFPMEAALLSSAARRKQRRWQSTMEISAKAGSVSQPGPSMGLPRSPAKRGSGPRAQSRPTLARQDACARCESDPSEHSADCTSLYHSTIAETSEDEEASDHTANRFGDESSSNDSEGCFRGSRRRLAIGSAEAGQGGWAWPRVPPQQPSRAPGNTRPPLPPVPKLCRIKASKALKKKIRRFQPAALKVMTMV.

Residues 1-281 (MWAPSGQGPA…QSPLFALPKE (281 aa)) form an inhibition of Nodal signaling region. Residues 55-107 (RGQELRLEAALTALREQLSRLRRQDAGLKTHLDQLDQQISELQLDVSRSSCEA) adopt a coiled-coil conformation. Disordered stretches follow at residues 486 to 540 (RRRV…CSES), 584 to 684 (RWQS…EGCF), and 696 to 728 (AEAG…PPVP). Basic and acidic residues-rich tracts occupy residues 505 to 516 (ERQRVTERDPSR) and 631 to 644 (ACAR…EHSA). Residues 645 to 656 (DCTSLYHSTIAE) are compositionally biased toward polar residues. A compositionally biased stretch (basic and acidic residues) spans 664–673 (SDHTANRFGD). A PDZ-binding motif is present at residues 754–757 (MTMV).

Belongs to the dapper family. In terms of assembly, can form homodimers and heterodimers with DACT1 or DACT3. Interacts with CSNK1D, PKA catalytic subunit, PKC-type kinase, CSNK2B, DVL1, DVL2, DVL3, VANGL1, VANGL2, TGFBR1, CTNNB1, CTNND2, CTNND1, LEF1, TCF7, TCF7L1 and HDAC1. As to expression, expressed in kidney (inner medullary collecting duct). Expressed in epidermal keratinocytes and hair follicles.

Its function is as follows. Involved in regulation of intracellular signaling pathways during development. Negatively regulates the Nodal signaling pathway, possibly by promoting the lysosomal degradation of Nodal receptors, such as TGFBR1. May be involved in control of the morphogenetic behavior of kidney ureteric bud cells by keeping cells epithelial and restraining their mesenchymal character. May play an inhibitory role in the re-epithelialization of skin wounds by attenuating TGF-beta signaling. This chain is Dapper homolog 2 (Dact2), found in Mus musculus (Mouse).